We begin with the raw amino-acid sequence, 152 residues long: Succinate dehydrogenase [ubiquinone] cytochrome b small subunit A, mitochondrial (152 aa).

The transit peptide at 1 to 21 (MVTVLRLSSLCRANRASAFKS) directs the protein to the mitochondrion. At 22–56 (LLIRPVPCLSQDLHTVQTSQIHTSQNHHAASKAAS) the chain is on the mitochondrial matrix side. The chain crosses the membrane as a helical span at residues 57 to 78 (LHWTSERALSVALLGLLPAAYL). Over 79–83 (YPGAA) the chain is Mitochondrial intermembrane. The chain crosses the membrane as a helical span at residues 84–104 (VDYSLAAALTLHGHWGLGQVV). A heme b-binding site is contributed by H95. Over 105–113 (TDYVHGDAK) the chain is Mitochondrial matrix. Residue Y107 coordinates a ubiquinone. Residues 114-135 (IKLANTSLFALSALTFAGLCYF) traverse the membrane as a helical segment. Residues 136–152 (NYHDVGICKAVAMLWSL) lie on the Mitochondrial intermembrane side of the membrane.

The protein belongs to the CybS family. In terms of assembly, component of complex II composed of four subunits: the flavoprotein (FP) SDHA, iron-sulfur protein (IP) SDHB, and a cytochrome b560 composed of SDHC and SDHD.

Its subcellular location is the mitochondrion inner membrane. It functions in the pathway carbohydrate metabolism; tricarboxylic acid cycle. Its function is as follows. Membrane-anchoring subunit of succinate dehydrogenase (SDH) that is involved in complex II of the mitochondrial electron transport chain and is responsible for transferring electrons from succinate to ubiquinone (coenzyme Q). SDH also oxidizes malate to the non-canonical enol form of oxaloacetate, enol-oxaloacetate. Enol-oxaloacetate, which is a potent inhibitor of the succinate dehydrogenase activity, is further isomerized into keto-oxaloacetate. In Xenopus laevis (African clawed frog), this protein is Succinate dehydrogenase [ubiquinone] cytochrome b small subunit A, mitochondrial (sdhd-a).